The chain runs to 123 residues: PTS-dependent dihydroxyacetone kinase, phosphotransferase subunit DhaM (123 aa).

The PTS EIIA type-4 domain maps to 2–123 (TYGIVIVSHS…EQLEKMLIEK (122 aa)). The Tele-phosphohistidine intermediate; for EIIA activity role is filled by histidine 10.

In terms of assembly, homodimer. The dihydroxyacetone kinase complex is composed of a homodimer of DhaM, a homodimer of DhaK and the subunit DhaL.

The enzyme catalyses dihydroxyacetone + phosphoenolpyruvate = dihydroxyacetone phosphate + pyruvate. It participates in polyol metabolism; glycerol degradation. In terms of biological role, component of the dihydroxyacetone kinase complex, which is responsible for the phosphoenolpyruvate (PEP)-dependent phosphorylation of dihydroxyacetone. DhaM serves as the phosphoryl donor. Is phosphorylated by phosphoenolpyruvate in an EI- and HPr-dependent reaction, and a phosphorelay system on histidine residues finally leads to phosphoryl transfer to DhaL and dihydroxyacetone. In Lactococcus lactis subsp. lactis (strain IL1403) (Streptococcus lactis), this protein is PTS-dependent dihydroxyacetone kinase, phosphotransferase subunit DhaM.